A 361-amino-acid polypeptide reads, in one-letter code: Phospho-N-acetylmuramoyl-pentapeptide-transferase (361 aa).

The next 10 membrane-spanning stretches (helical) occupy residues 27-47 (GALF…ISLL), 72-92 (TPTM…LLWA), 99-119 (VWIT…DDYL), 139-159 (ALIA…GLAY), 169-189 (AIVN…VGAG), 200-220 (GLAI…AYLV), 240-260 (LAVV…FNAP), 264-284 (IFMG…VAVA), 289-309 (IVLA…IIQV), and 338-358 (QVVI…LATL).

It belongs to the glycosyltransferase 4 family. MraY subfamily. It depends on Mg(2+) as a cofactor.

It is found in the cell inner membrane. It catalyses the reaction UDP-N-acetyl-alpha-D-muramoyl-L-alanyl-gamma-D-glutamyl-meso-2,6-diaminopimeloyl-D-alanyl-D-alanine + di-trans,octa-cis-undecaprenyl phosphate = di-trans,octa-cis-undecaprenyl diphospho-N-acetyl-alpha-D-muramoyl-L-alanyl-D-glutamyl-meso-2,6-diaminopimeloyl-D-alanyl-D-alanine + UMP. It functions in the pathway cell wall biogenesis; peptidoglycan biosynthesis. In terms of biological role, catalyzes the initial step of the lipid cycle reactions in the biosynthesis of the cell wall peptidoglycan: transfers peptidoglycan precursor phospho-MurNAc-pentapeptide from UDP-MurNAc-pentapeptide onto the lipid carrier undecaprenyl phosphate, yielding undecaprenyl-pyrophosphoryl-MurNAc-pentapeptide, known as lipid I. In Methylobacterium nodulans (strain LMG 21967 / CNCM I-2342 / ORS 2060), this protein is Phospho-N-acetylmuramoyl-pentapeptide-transferase.